A 213-amino-acid chain; its full sequence is Protein RCR1 (213 aa).

The Lumenal portion of the chain corresponds to 1–39 (MGLISYENEAINEVKKADNHHVSKFVTSYYGPSSSSWQS). Residues 40 to 62 (GIWILFVLFVAAVILIILFTFVA) form a helical membrane-spanning segment. Over 63 to 213 (NRRRRRMGRA…PERAKVNARS (151 aa)) the chain is Cytoplasmic. The PY motif motif lies at 104 to 107 (VPEY). A disordered region spans residues 190 to 213 (ERLPGGTTTQEINPPERAKVNARS). Residues 203-213 (PPERAKVNARS) show a composition bias toward basic and acidic residues.

In terms of assembly, interacts with PMT4 and WW domain of RSP5.

It is found in the endoplasmic reticulum membrane. Its function is as follows. Regulates chitin deposition in the cell wall. The protein is Protein RCR1 (RCR1) of Saccharomyces cerevisiae (strain ATCC 204508 / S288c) (Baker's yeast).